The sequence spans 156 residues: MPRRRVIGQRKILPDPKFGSELLAKFVNILMVDGKKSTAESIVYSALETLAQRSGKSELEAFEVALENVRPTVEVKSRRVGGSTYQVPVEVRPVRRNALAMRWIVEAARKRGDKSMALRLANELSDAAENKGTAVKKREDVHRMAEANKAFAHYRW.

It belongs to the universal ribosomal protein uS7 family. In terms of assembly, part of the 30S ribosomal subunit. Contacts proteins S9 and S11.

In terms of biological role, one of the primary rRNA binding proteins, it binds directly to 16S rRNA where it nucleates assembly of the head domain of the 30S subunit. Is located at the subunit interface close to the decoding center, probably blocks exit of the E-site tRNA. In Salmonella agona (strain SL483), this protein is Small ribosomal subunit protein uS7.